The chain runs to 193 residues: Ion-translocating oxidoreductase complex subunit A (193 aa).

6 consecutive transmembrane segments (helical) span residues 5–25 (LLLFVGTVLVNNFVLVKFLGL), 39–59 (IGMGLATTFVLTLASVCAWMV), 62–82 (FILLPLGLVYLRTLAFILVIA), 102–122 (LLGIFLPLITTNCAVLGVALL), 134–154 (AVYGFSAAAGFSLVMVLFAAI), and 171–191 (SIALITAGLMSLAFMGFTGLV).

Belongs to the NqrDE/RnfAE family. In terms of assembly, the complex is composed of six subunits: RnfA, RnfB, RnfC, RnfD, RnfE and RnfG.

It localises to the cell inner membrane. Functionally, part of a membrane-bound complex that couples electron transfer with translocation of ions across the membrane. In Yersinia enterocolitica serotype O:8 / biotype 1B (strain NCTC 13174 / 8081), this protein is Ion-translocating oxidoreductase complex subunit A.